Consider the following 256-residue polypeptide: MASGWFYMSCMVLGSLGSMCILFTTYWMQYWRGGFAWDGTVLMFNWHPVLMVSGMVVLYGAASLVYRLPASWVGPKLPWKVLHAALHLLAFTVTVVGLTAVFGFHNHSKITHLYSLHSWLGITTVALFACQWFLGFAVFLLPWASQWLRSLLKPVHVFFGACILSLSIASVISGINEKLFFVLKNATRPYSSLPGEAVFANSTGILVVSFGLLVLYILLASSWRRPDPGALTDRQVWLLVSHYRWDKAKKACFAPC.

The Cytoplasmic portion of the chain corresponds to 1–3 (MAS). The chain crosses the membrane as a helical span at residues 4–24 (GWFYMSCMVLGSLGSMCILFT). Positions 12–219 (VLGSLGSMCI…FGLLVLYILL (208 aa)) constitute a Cytochrome b561 domain. Residues 25–40 (TYWMQYWRGGFAWDGT) lie on the Lumenal side of the membrane. Residues 41–61 (VLMFNWHPVLMVSGMVVLYGA) traverse the membrane as a helical segment. Heme b is bound by residues H47 and R67. Residues 62–83 (ASLVYRLPASWVGPKLPWKVLH) are Cytoplasmic-facing. Positions 76 and 80 each coordinate L-ascorbate. Residue H83 participates in heme b binding. Residues 84–104 (AALHLLAFTVTVVGLTAVFGF) form a helical membrane-spanning segment. Residues 105-119 (HNHSKITHLYSLHSW) are Lumenal-facing. An N-linked (GlcNAc...) asparagine glycan is attached at N106. Heme b is bound by residues 112–115 (HLYS) and H117. The helical transmembrane segment at 120–140 (LGITTVALFACQWFLGFAVFL) threads the bilayer. Residues 141-154 (LPWASQWLRSLLKP) are Cytoplasmic-facing. R149 serves as a coordination point for L-ascorbate. Residues 155–175 (VHVFFGACILSLSIASVISGI) form a helical membrane-spanning segment. Heme b contacts are provided by H156 and E177. At 176-202 (NEKLFFVLKNATRPYSSLPGEAVFANS) the chain is on the lumenal side. The chain crosses the membrane as a helical span at residues 203–223 (TGILVVSFGLLVLYILLASSW). Residue R224 coordinates heme b. Over 224–256 (RRPDPGALTDRQVWLLVSHYRWDKAKKACFAPC) the chain is Cytoplasmic.

Homodimer. Heme b is required as a cofactor. In terms of processing, N-glycosylated.

It is found in the late endosome membrane. It localises to the lysosome membrane. It carries out the reaction Fe(3+)(out) + L-ascorbate(in) = monodehydro-L-ascorbate radical(in) + Fe(2+)(out) + H(+). Functionally, transmembrane reductase that uses ascorbate as an electron donor in the cytoplasm and transfers electrons across membranes to reduce iron cations Fe(3+) into Fe(2+) in the lumen of the late endosome and lysosome. Reduced iron can then be extruded from the late endosome and lysosome to the cytoplasm by divalent metal-specific transporters. It is therefore most probably involved in endosomal and lysosomal cellular iron homeostasis. The chain is Lysosomal membrane ascorbate-dependent ferrireductase CYB561A3 from Rattus norvegicus (Rat).